Consider the following 102-residue polypeptide: Probable non-specific lipid-transfer protein (102 aa).

A signal peptide spans 1–35 (MAMAMGMAMRKEAAVAVMMVMVVTLAAGADAGAGA). 4 disulfides stabilise this stretch: Cys37-Cys71, Cys45-Cys59, Cys60-Cys95, and Cys69-Cys102.

The protein belongs to the plant LTP family. B11E subfamily. In terms of tissue distribution, aleurone.

Its function is as follows. Potential phospholipid transfer protein. The protein is Probable non-specific lipid-transfer protein (LTP2) of Hordeum vulgare (Barley).